The sequence spans 570 residues: CDKN2A-interacting protein (570 aa).

Alanine 2 carries the post-translational modification N-acetylalanine. The 108-residue stretch at 19-126 (VETLRCEGET…KVKKRGISSS (108 aa)) folds into the XRN2-binding (XTBD) domain. The disordered stretch occupies residues 122–345 (GISSSNEGVE…TSLLMPKSSS (224 aa)). Serine 124 carries the post-translational modification Phosphoserine. Basic and acidic residues predominate over residues 147–162 (VERDHGKKSAKTDRSA). The span at 167-183 (SSGSKGSSTKSESSGTS) shows a compositional bias: low complexity. Lysine 176 participates in a covalent cross-link: Glycyl lysine isopeptide (Lys-Gly) (interchain with G-Cter in SUMO1). Polar residues predominate over residues 184–198 (ARSNSGVSHQNSSTS). Over residues 203-221 (SVCSQSSSNSSQVTSAGSG) the composition is skewed to low complexity. Residues 224–233 (SEPEAPDKHG) show a composition bias toward basic and acidic residues. Serine 234 is subject to Phosphoserine. 2 stretches are compositionally biased toward low complexity: residues 234–248 (SASFVSSLLKSSLNS) and 271–301 (SSVSVSQSSSEIEVPLLGSSGSSEVELPLLS). Over residues 302 to 317 (CKSSSETASSGLTTKA) the composition is skewed to polar residues. Residues 318–345 (SSEANISSSVSKNSSSSGTSLLMPKSSS) are compositionally biased toward low complexity. Serine 378 carries the post-translational modification Phosphoserine. The segment at 383-407 (SQLASKSSSQSSTSQLPSKSTSQSS) is disordered. The DRBM domain occupies 452–527 (NHGELLNAAI…SREALKLFLK (76 aa)).

It belongs to the CARF family. In terms of assembly, interacts with CDKN2A/p14ARF, p53/TP53 and MDM2. Interacts with CHEK2 and MAPK3. Interacts with XRN2. In terms of processing, may be ubiquitinated.

It is found in the nucleus. The protein localises to the nucleoplasm. In terms of biological role, regulates DNA damage response and cell proliferation in a dose-dependent manner through a number of signaling pathways involved in cell proliferation, apoptosis and senescence. The sequence is that of CDKN2A-interacting protein (Cdkn2aip) from Rattus norvegicus (Rat).